A 208-amino-acid polypeptide reads, in one-letter code: Imidazoleglycerol-phosphate dehydratase (208 aa).

This sequence belongs to the imidazoleglycerol-phosphate dehydratase family.

The enzyme catalyses D-erythro-1-(imidazol-4-yl)glycerol 3-phosphate = 3-(imidazol-4-yl)-2-oxopropyl phosphate + H2O. Its pathway is amino-acid biosynthesis; L-histidine biosynthesis; L-histidine from 5-phospho-alpha-D-ribose 1-diphosphate: step 6/9. The chain is Imidazoleglycerol-phosphate dehydratase (his3) from Trichoderma harzianum (Hypocrea lixii).